The following is a 419-amino-acid chain: Mitochondrial chaperone BCS1 (419 aa).

Topologically, residues 1–15 are mitochondrial intermembrane; that stretch reads MPLSDFVLALKDNPY. The helical transmembrane segment at 16 to 32 threads the bilayer; that stretch reads FGAGFGLVGVGTALALA. Topologically, residues 33-419 are mitochondrial matrix; sequence RKGAQLGLVA…AIQNAESLRR (387 aa). The residue at position 181 (Y181) is a Phosphotyrosine. Residue 230–237 participates in ATP binding; that stretch reads GPPGCGKS.

Belongs to the AAA ATPase family. BCS1 subfamily. As to quaternary structure, interacts with LETM1.

The protein localises to the mitochondrion inner membrane. It catalyses the reaction ATP + H2O = ADP + phosphate + H(+). Its function is as follows. Chaperone necessary for the incorporation of Rieske iron-sulfur protein UQCRFS1 into the mitochondrial respiratory chain complex III. Plays an important role in the maintenance of mitochondrial tubular networks, respiratory chain assembly and formation of the LETM1 complex. This chain is Mitochondrial chaperone BCS1 (BCS1L), found in Bos taurus (Bovine).